We begin with the raw amino-acid sequence, 308 residues long: Transaldolase (308 aa).

Catalysis depends on Lys125, which acts as the Schiff-base intermediate with substrate.

It belongs to the transaldolase family. Type 1 subfamily. As to quaternary structure, homodimer.

The protein resides in the cytoplasm. The enzyme catalyses D-sedoheptulose 7-phosphate + D-glyceraldehyde 3-phosphate = D-erythrose 4-phosphate + beta-D-fructose 6-phosphate. Its pathway is carbohydrate degradation; pentose phosphate pathway; D-glyceraldehyde 3-phosphate and beta-D-fructose 6-phosphate from D-ribose 5-phosphate and D-xylulose 5-phosphate (non-oxidative stage): step 2/3. Functionally, transaldolase is important for the balance of metabolites in the pentose-phosphate pathway. This chain is Transaldolase, found in Pseudomonas putida (strain GB-1).